We begin with the raw amino-acid sequence, 464 residues long: Argininosuccinate lyase (464 aa).

It belongs to the lyase 1 family. Argininosuccinate lyase subfamily.

It is found in the cytoplasm. It catalyses the reaction 2-(N(omega)-L-arginino)succinate = fumarate + L-arginine. The protein operates within amino-acid biosynthesis; L-arginine biosynthesis; L-arginine from L-ornithine and carbamoyl phosphate: step 3/3. The sequence is that of Argininosuccinate lyase from Stutzerimonas stutzeri (strain A1501) (Pseudomonas stutzeri).